A 1441-amino-acid polypeptide reads, in one-letter code: Probable cleavage and polyadenylation specificity factor subunit 1 (1441 aa).

It belongs to the CPSF1 family. As to quaternary structure, CPSF is a heterotetramer composed of four distinct subunits 160, 100, 70 and 30 kDa.

Its subcellular location is the nucleus. Functionally, CPSF plays a key role in pre-mRNA 3'-end formation, recognizing the AAUAAA signal sequence and interacting with poly(A)polymerase and other factors to bring about cleavage and poly(A) addition. This subunit is involved in the RNA recognition step of the polyadenylation reaction. The protein is Probable cleavage and polyadenylation specificity factor subunit 1 of Oryza sativa subsp. japonica (Rice).